The chain runs to 398 residues: Acetate kinase (398 aa).

Asparagine 8 is a Mg(2+) binding site. ATP is bound at residue lysine 15. Residue arginine 89 coordinates substrate. Catalysis depends on aspartate 146, which acts as the Proton donor/acceptor. Residues 206–210 (HIGNG), 283–285 (DMR), and 331–335 (GMGEN) contribute to the ATP site. Residue glutamate 383 participates in Mg(2+) binding.

The protein belongs to the acetokinase family. As to quaternary structure, homodimer. Requires Mg(2+) as cofactor. It depends on Mn(2+) as a cofactor.

It is found in the cytoplasm. The catalysed reaction is acetate + ATP = acetyl phosphate + ADP. Its pathway is metabolic intermediate biosynthesis; acetyl-CoA biosynthesis; acetyl-CoA from acetate: step 1/2. Its function is as follows. Catalyzes the formation of acetyl phosphate from acetate and ATP. Can also catalyze the reverse reaction. The polypeptide is Acetate kinase (Streptococcus pyogenes serotype M1).